A 59-amino-acid polypeptide reads, in one-letter code: Cecropin-B1 (59 aa).

The signal sequence occupies residues 1 to 23 (MNFNKLFLIVILAALLLLGQTEA). A Leucine amide modification is found at Leu-57.

Belongs to the cecropin family.

It localises to the secreted. Functionally, cecropins have lytic and antibacterial activity against several Gram-positive and Gram-negative bacteria. This chain is Cecropin-B1 (CECB1), found in Culex pipiens pipiens (Northern house mosquito).